Reading from the N-terminus, the 336-residue chain is Glyceraldehyde-3-phosphate dehydrogenase 1 (336 aa).

Residues 12–13, aspartate 34, and serine 120 contribute to the NAD(+) site; that span reads RI. D-glyceraldehyde 3-phosphate is bound by residues 150–152, threonine 181, arginine 198, 211–212, and arginine 234; these read SCT and TG. The active-site Nucleophile is the cysteine 151. Asparagine 316 is a binding site for NAD(+).

The protein belongs to the glyceraldehyde-3-phosphate dehydrogenase family. As to quaternary structure, homotetramer.

It localises to the cytoplasm. It carries out the reaction D-glyceraldehyde 3-phosphate + phosphate + NAD(+) = (2R)-3-phospho-glyceroyl phosphate + NADH + H(+). The protein operates within carbohydrate degradation; glycolysis; pyruvate from D-glyceraldehyde 3-phosphate: step 1/5. Functionally, catalyzes the oxidative phosphorylation of glyceraldehyde 3-phosphate (G3P) to 1,3-bisphosphoglycerate (BPG) using the cofactor NAD. The first reaction step involves the formation of a hemiacetal intermediate between G3P and a cysteine residue, and this hemiacetal intermediate is then oxidized to a thioester, with concomitant reduction of NAD to NADH. The reduced NADH is then exchanged with the second NAD, and the thioester is attacked by a nucleophilic inorganic phosphate to produce BPG. The protein is Glyceraldehyde-3-phosphate dehydrogenase 1 (gapA1) of Staphylococcus epidermidis (strain ATCC 35984 / DSM 28319 / BCRC 17069 / CCUG 31568 / BM 3577 / RP62A).